We begin with the raw amino-acid sequence, 595 residues long: Adenine deaminase 2 (595 aa).

This sequence belongs to the metallo-dependent hydrolases superfamily. Adenine deaminase family. Requires Mn(2+) as cofactor.

The catalysed reaction is adenine + H2O + H(+) = hypoxanthine + NH4(+). The protein is Adenine deaminase 2 of Rhizobium etli (strain ATCC 51251 / DSM 11541 / JCM 21823 / NBRC 15573 / CFN 42).